Reading from the N-terminus, the 730-residue chain is Protein groucho (730 aa).

Residues 144–411 (QVPGGPPQPM…GKPAYSFHMN (268 aa)) are disordered. The span at 198 to 233 (AEERLRNSVSPADREKYRTRSPLDIENDSKRRKDEK) shows a compositional bias: basic and acidic residues. Phosphoserine occurs at positions 205, 207, and 218. The segment at 206-267 (VSPADREKYR…SPRPNGEHVS (62 aa)) is CCN domain. The Nuclear localization signal motif lies at 227-230 (KRRK). At serine 242 the chain carries Phosphoserine; by CK2. The segment covering 254-283 (MESHSPRPNGEHVSMEVRDRESLNGERLEK) has biased composition (basic and acidic residues). Phosphoserine; by CDC2 is present on serine 258. The segment at 262–425 (NGEHVSMEVR…LQPVPFPPDA (164 aa)) is binding to basic helix-loop-helix domain. Phosphoserine is present on serine 267. 3 stretches are compositionally biased toward low complexity: residues 296-308 (SRSG…STPS), 322-345 (AKAR…QMMP), and 353-362 (YPGAPYQRPA). 2 positions are modified to phosphothreonine: threonine 326 and threonine 328. Positions 366 to 382 (QRPPSDPAYGRPPPMPY) are enriched in pro residues. 7 WD repeats span residues 442–480 (SHGE…NKNP), 488–527 (QRDN…PRIK), 532–571 (SAAP…LVRQ), 574–613 (GHTD…QLQQ), 615–654 (DFSS…KYQL), 656–695 (LHES…SIFQ), and 697–730 (KETS…EVIY).

The protein belongs to the WD repeat Groucho/TLE family. As to quaternary structure, forms a complex with the hairy/Enhancer of split/deadpan family of basic helix-loop-helix proteins in order to repress transcription. Its activity in regulating transcription depends on other proteins as it lacks a DNA-binding motif. Interacts with hairy/hry (via WRPW motif). Post-translationally, ubiquitinated by XIAP/BIRC4. Ubiquitinated by hyd in response to Wnt signaling, leading to degradation by the proteasome.

It is found in the nucleus. Its function is as follows. Transcriptional corepressor that regulates transcription when recruited to specific target DNA by hairy-related bHLH proteins. Maternally required for neurogenesis; in the segregation of the neuroectoderm. Directly or indirectly interacts with Notch and Delta. The sequence is that of Protein groucho (gro) from Drosophila melanogaster (Fruit fly).